Consider the following 271-residue polypeptide: Short-chain dehydrogenase PC-15 (271 aa).

Isoleucine 8, threonine 34, lysine 40, aspartate 56, asparagine 84, tyrosine 148, lysine 152, valine 181, and threonine 183 together coordinate NADP(+). Tyrosine 148 functions as the Proton acceptor in the catalytic mechanism. Lysine 152 functions as the Lowers pKa of active site Tyr in the catalytic mechanism.

This sequence belongs to the short-chain dehydrogenases/reductases (SDR) family.

Its pathway is secondary metabolite biosynthesis. Short-chain dehydrogenase; part of the gene cluster that mediates the biosynthesis of the indole diterpenes penitrems. The geranylgeranyl diphosphate (GGPP) synthase penG catalyzes the first step in penitrem biosynthesis via conversion of farnesyl pyrophosphate and isopentyl pyrophosphate into geranylgeranyl pyrophosphate (GGPP). Condensation of indole-3-glycerol phosphate with GGPP by the prenyl transferase penC then forms 3-geranylgeranylindole (3-GGI). Epoxidation by the FAD-dependent monooxygenase penM leads to a epoxidized-GGI that is substrate of the terpene cyclase penB for cyclization to yield paspaline. Paspaline is subsequently converted to 13-desoxypaxilline by the cytochrome P450 monooxygenase penP, the latter being then converted to paxilline by the cytochrome P450 monooxygenase penQ. Paxilline is converted to beta-paxitriol via C-10 ketoreduction by the short-chain dehydrogenase PC-15 which can be monoprenylated at the C-20 by the indole diterpene prenyltransferase penD. A two-step elimination (acetylation and elimination) process performed by the O-acetyltransferase PC-16 and the P.simplicissimum ptmI-ortholog not yet identified in P.crustosum, leads to the production of the prenylated form of penijanthine. The FAD-linked oxidoreductase ptmO then converts the prenylated form of penijanthine into PC-M5 which is in turn transformed into PC-M4 by the aromatic dimethylallyltransferase PC-22. A series of oxidation steps involving 4 cytochrome P450 monooxygenases (PC-21, PC-05, PC-23, PC-20) and a FAD-dependent monooxygenase (PC-14) are required for the transformation of PC-M4 to penitrems A and E. Synthesis of these final products is proposed to proceed via penitrems D and C (PC-21, PC-05, PC-14) and penitrems B and F (PC-21, PC-05, PC-14, PC-23). This Penicillium crustosum (Blue mold fungus) protein is Short-chain dehydrogenase PC-15.